The chain runs to 405 residues: Cellobiose 2-epimerase (405 aa).

It belongs to the cellobiose 2-epimerase family.

The catalysed reaction is D-cellobiose = beta-D-glucosyl-(1-&gt;4)-D-mannopyranose. In terms of biological role, catalyzes the reversible epimerization of cellobiose to 4-O-beta-D-glucopyranosyl-D-mannose (Glc-Man). Can also epimerize lactose to epilactose. The polypeptide is Cellobiose 2-epimerase (ce13) (Eubacterium cellulosolvens).